The following is a 418-amino-acid chain: MNIFEELKARGLVFQTTDEQALVKALTEGQVSYYTGYDPTADSLHLGHLVAILTSRRLQLAGHKPYALVGGATGLIGDPSFKDAERSLQTKETVLEWSDKIKGQLSTFLDFENGDNKAELVNNYDWFSQISFIDFLRDVGKYFTVNYMMSKDSVKKRIETGISYTEFAYQIMQGYDFYELNDKHNVTLQIGGSDQWGNMTAGTELLRKKADKTGHVMTVPLITDSTGKKFGKSEGNAVWLDADKTSPYEMYQFWLNVMDDDAVRFLKIFTFLSLDEIAEIETQFNAARHERLAQKTLAREVVTLVHGEEAYKQALNITEQLFAGNIKNLSANELKQGLSNVPNYHVQSIDNHNIVEILVAAKISPSKRQAREDVQNGAIYINGDRVQDLDYQLSNDDKIDDQLTVIRRGKKKYAVLTY.

Tyr34 contributes to the L-tyrosine binding site. Positions 39–48 (PTADSLHLGH) match the 'HIGH' region motif. L-tyrosine is bound by residues Tyr169 and Gln173. The 'KMSKS' region signature appears at 229–233 (KFGKS). Lys232 serves as a coordination point for ATP. Residues 352–418 (HNIVEILVAA…GKKKYAVLTY (67 aa)) form the S4 RNA-binding domain.

This sequence belongs to the class-I aminoacyl-tRNA synthetase family. TyrS type 1 subfamily. As to quaternary structure, homodimer.

The protein localises to the cytoplasm. It carries out the reaction tRNA(Tyr) + L-tyrosine + ATP = L-tyrosyl-tRNA(Tyr) + AMP + diphosphate + H(+). Functionally, catalyzes the attachment of tyrosine to tRNA(Tyr) in a two-step reaction: tyrosine is first activated by ATP to form Tyr-AMP and then transferred to the acceptor end of tRNA(Tyr). The protein is Tyrosine--tRNA ligase of Streptococcus pyogenes serotype M1.